Reading from the N-terminus, the 86-residue chain is Putative membrane protein insertion efficiency factor (86 aa).

The protein belongs to the UPF0161 family.

It localises to the cell inner membrane. Functionally, could be involved in insertion of integral membrane proteins into the membrane. The sequence is that of Putative membrane protein insertion efficiency factor from Cellvibrio japonicus (strain Ueda107) (Pseudomonas fluorescens subsp. cellulosa).